A 385-amino-acid chain; its full sequence is Flap endonuclease 1 (385 aa).

Residues M1–R104 form an N-domain region. D34 provides a ligand contact to Mg(2+). The DNA site is built by R47 and R70. Mg(2+) contacts are provided by D86, E158, E160, D179, and D181. The interval G122–Y253 is I-domain. A DNA-binding site is contributed by E158. Positions 231 and 233 each coordinate DNA. D233 is a Mg(2+) binding site. Residues T336 to F344 form an interaction with PCNA region. The tract at residues T346–K385 is disordered. A compositionally biased stretch (basic residues) spans A368–K385.

Belongs to the XPG/RAD2 endonuclease family. FEN1 subfamily. As to quaternary structure, interacts with PCNA. Three molecules of FEN1 bind to one PCNA trimer with each molecule binding to one PCNA monomer. PCNA stimulates the nuclease activity without altering cleavage specificity. Requires Mg(2+) as cofactor. Post-translationally, phosphorylated. Phosphorylation upon DNA damage induces relocalization to the nuclear plasma.

The protein localises to the nucleus. Its subcellular location is the nucleolus. It localises to the nucleoplasm. It is found in the mitochondrion. Functionally, structure-specific nuclease with 5'-flap endonuclease and 5'-3' exonuclease activities involved in DNA replication and repair. During DNA replication, cleaves the 5'-overhanging flap structure that is generated by displacement synthesis when DNA polymerase encounters the 5'-end of a downstream Okazaki fragment. It enters the flap from the 5'-end and then tracks to cleave the flap base, leaving a nick for ligation. Also involved in the long patch base excision repair (LP-BER) pathway, by cleaving within the apurinic/apyrimidinic (AP) site-terminated flap. Acts as a genome stabilization factor that prevents flaps from equilibrating into structures that lead to duplications and deletions. Also possesses 5'-3' exonuclease activity on nicked or gapped double-stranded DNA, and exhibits RNase H activity. Also involved in replication and repair of rDNA and in repairing mitochondrial DNA. This is Flap endonuclease 1 from Drosophila simulans (Fruit fly).